Here is a 591-residue protein sequence, read N- to C-terminus: Parathyroid hormone/parathyroid hormone-related peptide receptor (591 aa).

Residues 1–26 (MGTARIAPSLALLLCCPVLSSAYALV) form the signal peptide. Topologically, residues 27 to 188 (DADDVFTKEE…REREVFDRLG (162 aa)) are extracellular. 3 disulfides stabilise this stretch: cysteine 48–cysteine 117, cysteine 108–cysteine 148, and cysteine 131–cysteine 170. Residues 67–104 (KGWTPASTSGKPRKEKAPGKFYPESKENKDVPTGSRRR) form a disordered region. Residues 81–96 (EKAPGKFYPESKENKD) are compositionally biased toward basic and acidic residues. Asparagine 151, asparagine 161, asparagine 166, and asparagine 176 each carry an N-linked (GlcNAc...) asparagine glycan. Residues 189–212 (MIYTVGYSMSLASLTVAVLILAYF) traverse the membrane as a helical segment. Topologically, residues 213–219 (RRLHCTR) are cytoplasmic. The helical transmembrane segment at 220-239 (NYIHMHMFLSFMLRAASIFV) threads the bilayer. At 240 to 282 (KDAVLYSGFTLDEAERLTEEELHIIAQVPPPPAAAAVGYAGCR) the chain is on the extracellular side. The chain crosses the membrane as a helical span at residues 283–306 (VAVTFFLYFLATNYYWILVEGLYL). Over 307–320 (HSLIFMAFFSEKKY) the chain is Cytoplasmic. The helical transmembrane segment at 321–342 (LWGFTIFGWGLPAVFVAVWVGV) threads the bilayer. At 343 to 361 (RATLANTGCWDLSSGHKKW) the chain is on the extracellular side. Residues 362-382 (IIQVPILASVVLNFILFINII) traverse the membrane as a helical segment. The Cytoplasmic segment spans residues 383–409 (RVLATKLRETNAGRCDTRQQYRKLLRS). A helical transmembrane segment spans residues 410–428 (TLVLVPLFGVHYTVFMALP). Residues 429–440 (YTEVSGTLWQIQ) are Extracellular-facing. A helical membrane pass occupies residues 441 to 463 (MHYEMLFNSFQGFFVAIIYCFCN). Over 464-591 (GEVQAEIRKS…LLQEEWETVM (128 aa)) the chain is Cytoplasmic. An Important for interaction with G proteins motif is present at residues 474–477 (WSRW).

Belongs to the G-protein coupled receptor 2 family. Homodimer in the absence of bound ligand. Peptide hormone binding leads to dissociation of the homodimer. In terms of processing, N-glycosylated. Detected in kidney.

It localises to the cell membrane. Functionally, G-protein-coupled receptor for parathyroid hormone (PTH) and for parathyroid hormone-related peptide (PTHLH). Ligand binding causes a conformation change that triggers signaling via guanine nucleotide-binding proteins (G proteins) and modulates the activity of downstream effectors, such as adenylate cyclase (cAMP). PTH1R is coupled to G(s) G alpha proteins and mediates activation of adenylate cyclase activity. PTHLH dissociates from PTH1R more rapidly than PTH; as consequence, the cAMP response induced by PTHLH decays faster than the response induced by PTH. The polypeptide is Parathyroid hormone/parathyroid hormone-related peptide receptor (Pth1r) (Mus musculus (Mouse)).